The chain runs to 410 residues: Na(+)/H(+) antiporter NhaS4 (410 aa).

A run of 11 helical transmembrane segments spans residues 7–27 (LLIL…GLLF), 33–53 (PPVI…LGLL), 69–89 (FLYL…GLEL), 107–127 (VSIF…LYSL), 135–155 (FIPF…PVLA), 173–193 (LTCA…AIAV), 199–219 (IFGA…MVTL), 241–261 (LLTF…WIGI), 291–311 (FVST…TDLG), 319–339 (WAVC…GVYV), and 376–396 (GVIS…TTII).

The protein belongs to the monovalent cation:proton antiporter 2 (CPA2) transporter (TC 2.A.37) family.

The protein resides in the membrane. Its function is as follows. Na(+)/H(+) antiporter. The chain is Na(+)/H(+) antiporter NhaS4 (nhaS4) from Synechocystis sp. (strain ATCC 27184 / PCC 6803 / Kazusa).